Reading from the N-terminus, the 298-residue chain is Tyrosine recombinase XerC (298 aa).

One can recognise a Core-binding (CB) domain in the interval 1 to 83 (MHAAVERFLH…ALSRFADHLV (83 aa)). The region spanning 104–283 (HLPRPVDVDQ…DWQHLADAYD (180 aa)) is the Tyr recombinase domain. Catalysis depends on residues Arg-144, Lys-166, His-235, Arg-238, and His-261. Tyr-270 (O-(3'-phospho-DNA)-tyrosine intermediate) is an active-site residue.

The protein belongs to the 'phage' integrase family. XerC subfamily. In terms of assembly, forms a cyclic heterotetrameric complex composed of two molecules of XerC and two molecules of XerD.

The protein localises to the cytoplasm. Its function is as follows. Site-specific tyrosine recombinase, which acts by catalyzing the cutting and rejoining of the recombining DNA molecules. The XerC-XerD complex is essential to convert dimers of the bacterial chromosome into monomers to permit their segregation at cell division. It also contributes to the segregational stability of plasmids. The chain is Tyrosine recombinase XerC from Chromohalobacter salexigens (strain ATCC BAA-138 / DSM 3043 / CIP 106854 / NCIMB 13768 / 1H11).